Here is a 210-residue protein sequence, read N- to C-terminus: Mitochondrial import receptor subunit TOM20-2 (210 aa).

At M1 the chain carries N-acetylmethionine. The Cytoplasmic segment spans residues 1–178; the sequence is MEFSTADFER…SSKKKKRNTE (178 aa). 2 TPR repeats span residues 42–75 and 83–120; these read LLELSQFQPIPEAKLMLNDAISKLEEALTINPGK and ANAYTAHAFYVHDPEEAKEHFDKATEYFQRAENEDPGN. The span at 151–161 shows a compositional bias: gly residues; that stretch reads GGGGGGGGGGM. The tract at residues 151-172 is disordered; it reads GGGGGGGGGGMASSNVSQSSKK. Residues 179–199 traverse the membrane as a helical segment; that stretch reads FTYDVCGWIILACGIVAWVGM. Over 200–210 the chain is Mitochondrial intermembrane; that stretch reads AKSLGPPPPAR.

This sequence belongs to the Tom20 family. As to quaternary structure, forms part of the preprotein translocase complex of the outer mitochondrial membrane (TOM complex) which consists of at least 6 different proteins (TOM5, TOM6, TOM7, TOM20, TOM22/TOM9 and TOM40). Component of a mitochondrial large protein complex that contains, at least, MIC60, DGS1, TOM40, TOM20 proteins, and petC/RISP. The N-terminus is blocked. Expressed in roots, flowers, young cotyledons and leaves.

The protein localises to the mitochondrion outer membrane. Functionally, central component of the receptor complex responsible for the recognition and translocation of cytosolically synthesized mitochondrial preproteins. Together with TOM22 functions as the transit peptide receptor at the surface of the mitochondrion outer membrane and facilitates the movement of preproteins into the translocation pore. The polypeptide is Mitochondrial import receptor subunit TOM20-2 (Arabidopsis thaliana (Mouse-ear cress)).